A 997-amino-acid polypeptide reads, in one-letter code: MKAQTVSPTQGTISESSYVHSNLWSSRKLMIVGVLVGWLLVIHLLVNMWLLILLCASLVALGGWLGSTAILGASGQLHLERFITITTCPPCPEAERQLEQEINRTIQMIIRDFVLSWYRSVSHEPAFEAEMEAAMKGLVQELRRRMSIVDSHALTQRVLTLCGCHLQSYIQAKEATAKEQSCPVQPSQLWDAYCQVTAPHPAMSCPTTEVTYARGIVNLILKELVPKPHLETRTGRHVVVEVITCNVILPLISKLSDPDWIHLILVSIFSKYRHDAAQGTKPPCSSSVLEQPSVPTSLPLIVEVESLPVGKASSPATAPVHLTSSEPAPSPEIEEGHEAVEGDLPGMLEEKKVGNSSSHFLQPDIRGPLFLCEDSELESPLSELSKETILLMTPGNFLSDRIQDALCALDDSGALEPKDGEGSECMEGAEAEEAPGTDTETGMLVSVLNCPEIQIDTADKEVEQGDDTSLTALLEEPEKPCPLRPSCLDKDLASGVCSLEPAMPPVPLSSSPPGPLSSATFSFESLSSPDGPVVIQNLRITGTITAREHSGTGFHPYTLYTVKYETVLNGENSSGLQQLAYHTVNRRYREFLNLQTRLEEKPDLRKFIKNVKGPKKLFPDLPFGNMDSDRVEARKSLLESFLKQLCAIPEIGNSEEVQEFLALNTDARIAFVKKPFMVSRIDKMVVSAIVDTLKTAFPRSEPQSPTEELSEAENESKPQTEGKKASKSRLRFSSSKIAPALSIAEAQDKILYCLQEGNSESEVLSMSGMESFIEKQTKLLRIQPAEVPDKDPQQVPKEYVDSGLLDKAVVAQELNKSGPGTETELADTAFDLILLLLMEQWKWLCTESMQKFLHIIFGTLVQRWLEVQVANLTCPQRWAQYLHLLRESIWPGGVLPKFPRPGRTQAQKAATEKQALQSLMDLLPDFLVEILGVNKCRLSWSLVLESFQQPLINRHLIYCLGDIILELLDLSASVEECAPATSASDSPGSLKKMAVST.

The 179-residue stretch at 95–273 (ERQLEQEINR…ILVSIFSKYR (179 aa)) folds into the PXA domain. Disordered stretches follow at residues 313–333 (SSPA…SPEI) and 413–437 (GALE…APGT). The segment covering 422-435 (GSECMEGAEAEEAP) has biased composition (acidic residues). In terms of domain architecture, PX spans 538 to 668 (LRITGTITAR…EFLALNTDAR (131 aa)). Positions 587 and 634 each coordinate a 1,2-diacyl-sn-glycero-3-phospho-(1D-myo-inositol-3-phosphate). A disordered region spans residues 697 to 728 (FPRSEPQSPTEELSEAENESKPQTEGKKASKS). Basic and acidic residues predominate over residues 714-724 (NESKPQTEGKK).

The protein belongs to the sorting nexin family. As to quaternary structure, interacts with PTPRN.

The protein resides in the early endosome membrane. It is found in the cytoplasmic vesicle membrane. Functionally, plays a role in intracellular vesicle trafficking and exocytosis. May play a role in maintaining insulin-containing dense core vesicles in pancreatic beta-cells and in preventing their degradation. May play a role in insulin secretion. Interacts with membranes containing phosphatidylinositol 3-phosphate (PtdIns(3P)). In Mus musculus (Mouse), this protein is Sorting nexin-19.